The following is a 374-amino-acid chain: Dual-specificity RNA methyltransferase RlmN (374 aa).

The active-site Proton acceptor is glutamate 91. Residues glutamate 97–aspartate 340 enclose the Radical SAM core domain. Cysteine 104 and cysteine 345 are disulfide-bonded. Residues cysteine 111, cysteine 115, and cysteine 118 each coordinate [4Fe-4S] cluster. S-adenosyl-L-methionine-binding positions include glycine 166 to glutamate 167, serine 198, serine 220 to histidine 222, and asparagine 302. The active-site S-methylcysteine intermediate is cysteine 345.

It belongs to the radical SAM superfamily. RlmN family. [4Fe-4S] cluster is required as a cofactor.

It localises to the cytoplasm. It carries out the reaction adenosine(2503) in 23S rRNA + 2 reduced [2Fe-2S]-[ferredoxin] + 2 S-adenosyl-L-methionine = 2-methyladenosine(2503) in 23S rRNA + 5'-deoxyadenosine + L-methionine + 2 oxidized [2Fe-2S]-[ferredoxin] + S-adenosyl-L-homocysteine. The enzyme catalyses adenosine(37) in tRNA + 2 reduced [2Fe-2S]-[ferredoxin] + 2 S-adenosyl-L-methionine = 2-methyladenosine(37) in tRNA + 5'-deoxyadenosine + L-methionine + 2 oxidized [2Fe-2S]-[ferredoxin] + S-adenosyl-L-homocysteine. Its function is as follows. Specifically methylates position 2 of adenine 2503 in 23S rRNA and position 2 of adenine 37 in tRNAs. m2A2503 modification seems to play a crucial role in the proofreading step occurring at the peptidyl transferase center and thus would serve to optimize ribosomal fidelity. This chain is Dual-specificity RNA methyltransferase RlmN, found in Delftia acidovorans (strain DSM 14801 / SPH-1).